A 338-amino-acid polypeptide reads, in one-letter code: Nicotinate-nucleotide--dimethylbenzimidazole phosphoribosyltransferase (338 aa).

The active-site Proton acceptor is the glutamate 305.

The protein belongs to the CobT family. Homodimer.

It carries out the reaction 5,6-dimethylbenzimidazole + nicotinate beta-D-ribonucleotide = alpha-ribazole 5'-phosphate + nicotinate + H(+). The protein operates within nucleoside biosynthesis; alpha-ribazole biosynthesis; alpha-ribazole from 5,6-dimethylbenzimidazole: step 1/2. Functionally, catalyzes the synthesis of alpha-ribazole-5'-phosphate from nicotinate mononucleotide (NAMN) and 5,6-dimethylbenzimidazole (DMB). The protein is Nicotinate-nucleotide--dimethylbenzimidazole phosphoribosyltransferase (cobU) of Sinorhizobium sp.